The sequence spans 882 residues: Leucine--tRNA ligase (882 aa).

The short motif at 43 to 53 is the 'HIGH' region element; that stretch reads PYPSGNLHMGH. Positions 632–636 match the 'KMSKS' region motif; it reads TMSKS. K635 is an ATP binding site.

Belongs to the class-I aminoacyl-tRNA synthetase family.

Its subcellular location is the cytoplasm. The enzyme catalyses tRNA(Leu) + L-leucine + ATP = L-leucyl-tRNA(Leu) + AMP + diphosphate. This Synechococcus sp. (strain JA-2-3B'a(2-13)) (Cyanobacteria bacterium Yellowstone B-Prime) protein is Leucine--tRNA ligase.